The following is a 470-amino-acid chain: Tubulin gamma chain (470 aa).

Position 144–150 (144–150) interacts with GTP; sequence AGGTGSG.

The protein belongs to the tubulin family.

The protein resides in the cytoplasm. The protein localises to the cytoskeleton. It localises to the microtubule organizing center. Its subcellular location is the spindle pole body. Tubulin is the major constituent of microtubules. The gamma chain is found at microtubule organizing centers (MTOC) such as the spindle poles or the centrosome, suggesting that it is involved in the minus-end nucleation of microtubule assembly. This chain is Tubulin gamma chain (TUB4), found in Eremothecium gossypii (strain ATCC 10895 / CBS 109.51 / FGSC 9923 / NRRL Y-1056) (Yeast).